The chain runs to 639 residues: Far upstream element-binding protein 1 (639 aa).

Disordered regions lie at residues 1–27 (MADY…NDAF) and 40–88 (KIGG…LPPM). Position 2 is an N-acetylalanine (Ala2). Over residues 14 to 23 (SAGGGGGGGV) the composition is skewed to gly residues. A phosphoserine mark is found at Ser48 and Ser51. The span at 61–73 (RPLEDGDQPDAKK) shows a compositional bias: basic and acidic residues. 3 KH domains span residues 95–159 (VMTE…KRLL), 180–246 (NAVQ…KEMV), and 270–334 (NEGI…AEII). A Phosphoserine modification is found at Ser135. Thr148 carries the phosphothreonine modification. 4 positions are modified to omega-N-methylarginine: Arg316, Arg354, Arg356, and Arg358. Residues 341 to 360 (VQAGNPGGPGPGGRGRGRGQ) are disordered. A compositionally biased stretch (gly residues) spans 345-360 (NPGGPGPGGRGRGRGQ). Positions 371 to 438 (LQEFNFIVPT…QQIDYARQLI (68 aa)) constitute a KH 4 domain. Phosphothreonine is present on Thr427. Disordered stretches follow at residues 442-527 (IGGP…GTDP) and 543-574 (QAQP…PAGQ). The segment covering 463–500 (PHGPPGPPGPGTPMGPYNPAPYNPGPPGPAPHGPPAPY) has biased composition (pro residues). Positions 551-568 (PAGAPTTTQTNGQGDQQN) are enriched in low complexity. The residue at position 625 (Ser625) is a Phosphoserine.

Found in a complex with PUF60 and far upstream element (FUSE) DNA segment. Interacts with PUF60 and JTV1. In terms of processing, ubiquitinated. This targets the protein for proteasome-mediated degradation.

It localises to the nucleus. Regulates MYC expression by binding to a single-stranded far-upstream element (FUSE) upstream of the MYC promoter. May act both as activator and repressor of transcription. In Rattus norvegicus (Rat), this protein is Far upstream element-binding protein 1.